The primary structure comprises 180 residues: Oligoribonuclease (180 aa).

Residues 7–170 (LIWIDLEMTG…DDIRDSINEL (164 aa)) form the Exonuclease domain. The active site involves Tyr128.

This sequence belongs to the oligoribonuclease family.

Its subcellular location is the cytoplasm. Its function is as follows. 3'-to-5' exoribonuclease specific for small oligoribonucleotides. In Marinobacter nauticus (strain ATCC 700491 / DSM 11845 / VT8) (Marinobacter aquaeolei), this protein is Oligoribonuclease.